We begin with the raw amino-acid sequence, 260 residues long: NAD-capped RNA hydrolase NudC (260 aa).

Positions 25 and 69 each coordinate substrate. Zn(2+)-binding residues include cysteine 98 and cysteine 101. Residue glutamate 111 participates in substrate binding. 2 residues coordinate Zn(2+): cysteine 116 and cysteine 119. Position 124 (tyrosine 124) interacts with substrate. The Nudix hydrolase domain maps to 125–248 (PQIAPCVIVA…TVARRLIEDT (124 aa)). 3 residues coordinate a divalent metal cation: alanine 158, glutamate 174, and glutamate 178. Residues 159 to 180 (GFVEVGETLEQAVSREVLEESN) carry the Nudix box motif. A substrate-binding site is contributed by 192 to 199 (QPWPFPHS). Glutamate 219 serves as a coordination point for a divalent metal cation. Alanine 241 contributes to the substrate binding site.

Belongs to the Nudix hydrolase family. NudC subfamily. Homodimer. The cofactor is Mg(2+). Mn(2+) serves as cofactor. It depends on Zn(2+) as a cofactor.

It carries out the reaction a 5'-end NAD(+)-phospho-ribonucleoside in mRNA + H2O = a 5'-end phospho-adenosine-phospho-ribonucleoside in mRNA + beta-nicotinamide D-ribonucleotide + 2 H(+). It catalyses the reaction NAD(+) + H2O = beta-nicotinamide D-ribonucleotide + AMP + 2 H(+). The catalysed reaction is NADH + H2O = reduced beta-nicotinamide D-ribonucleotide + AMP + 2 H(+). In terms of biological role, mRNA decapping enzyme that specifically removes the nicotinamide adenine dinucleotide (NAD) cap from a subset of mRNAs by hydrolyzing the diphosphate linkage to produce nicotinamide mononucleotide (NMN) and 5' monophosphate mRNA. The NAD-cap is present at the 5'-end of some mRNAs and stabilizes RNA against 5'-processing. Has preference for mRNAs with a 5'-end purine. Catalyzes the hydrolysis of a broad range of dinucleotide pyrophosphates. The sequence is that of NAD-capped RNA hydrolase NudC from Yersinia pestis bv. Antiqua (strain Antiqua).